The sequence spans 243 residues: 2,3-bisphosphoglycerate-dependent phosphoglycerate mutase (243 aa).

Substrate contacts are provided by residues 8–15 (RHGQSEWN), 21–22 (TG), Arg-60, 87–90 (ERHY), Lys-98, 114–115 (RR), and 183–184 (GN). His-9 (tele-phosphohistidine intermediate) is an active-site residue. Glu-87 (proton donor/acceptor) is an active-site residue.

Belongs to the phosphoglycerate mutase family. BPG-dependent PGAM subfamily.

It catalyses the reaction (2R)-2-phosphoglycerate = (2R)-3-phosphoglycerate. The protein operates within carbohydrate degradation; glycolysis; pyruvate from D-glyceraldehyde 3-phosphate: step 3/5. Functionally, catalyzes the interconversion of 2-phosphoglycerate and 3-phosphoglycerate. The chain is 2,3-bisphosphoglycerate-dependent phosphoglycerate mutase from Clostridium acetobutylicum (strain ATCC 824 / DSM 792 / JCM 1419 / IAM 19013 / LMG 5710 / NBRC 13948 / NRRL B-527 / VKM B-1787 / 2291 / W).